The sequence spans 426 residues: Serine/threonine-protein kinase ssn3 (426 aa).

Positions 41 to 368 (YHIVGFISSG…AQEALEHPYF (328 aa)) constitute a Protein kinase domain. ATP-binding positions include 47-55 (ISSGTYGRV) and Lys-71. Asp-173 acts as the Proton acceptor in catalysis. Residues 390–426 (RVTQDDNDIRSGSLPGTKRSGLPDDSLMGRAAKRLKE) form a disordered region.

The protein belongs to the protein kinase superfamily. CMGC Ser/Thr protein kinase family. CDC2/CDKX subfamily. As to quaternary structure, component of the srb8-11 complex, a regulatory module of the Mediator complex. Mg(2+) is required as a cofactor.

The protein localises to the nucleus. It carries out the reaction L-seryl-[protein] + ATP = O-phospho-L-seryl-[protein] + ADP + H(+). The catalysed reaction is L-threonyl-[protein] + ATP = O-phospho-L-threonyl-[protein] + ADP + H(+). The enzyme catalyses [DNA-directed RNA polymerase] + ATP = phospho-[DNA-directed RNA polymerase] + ADP + H(+). In terms of biological role, component of the srb8-11 complex. The srb8-11 complex is a regulatory module of the Mediator complex which is itself involved in regulation of basal and activated RNA polymerase II-dependent transcription. The srb8-11 complex may be involved in the transcriptional repression of a subset of genes regulated by Mediator. It may inhibit the association of the Mediator complex with RNA polymerase II to form the holoenzyme complex. The srb8-11 complex phosphorylates the C-terminal domain (CTD) of the largest subunit of RNA polymerase II. In Aspergillus clavatus (strain ATCC 1007 / CBS 513.65 / DSM 816 / NCTC 3887 / NRRL 1 / QM 1276 / 107), this protein is Serine/threonine-protein kinase ssn3 (ssn3).